The following is a 370-amino-acid chain: Protein-tyrosine sulfotransferase 1 (370 aa).

The Cytoplasmic segment spans residues 1–8 (MVGKLKQN). The helical; Signal-anchor for type II membrane protein transmembrane segment at 9 to 25 (LLLACLVISSVTVFYLG) threads the bilayer. Over 26–370 (QHAMECHHRI…KEKPQTEQVE (345 aa)) the chain is Lumenal. The N-linked (GlcNAc...) asparagine glycan is linked to Asn60. 79 to 83 (RSGTT) contacts 3'-phosphoadenylyl sulfate. A disulfide bridge links Cys97 with Cys157. Residue Glu100 is the Proton donor/acceptor of the active site. An interaction with peptide substrate region spans residues 102–106 (RVIPR). Residues Arg184, Ser192, and Arg196 each contribute to the 3'-phosphoadenylyl sulfate site. Cysteines 226 and 234 form a disulfide. Tyr239 lines the 3'-phosphoadenylyl sulfate pocket. N-linked (GlcNAc...) asparagine glycosylation is present at Asn262. Residues 286 to 295 (STDQVIKPVN) and Lys301 contribute to the 3'-phosphoadenylyl sulfate site.

It belongs to the protein sulfotransferase family. As to quaternary structure, homodimer. Can also form heterodimers with TPST2. In terms of processing, N-glycosylated. Ubiquitous. Detected in heart, brain, lung, liver, spleen, kidney, skeletal muscle and testis.

It is found in the golgi apparatus membrane. The catalysed reaction is L-tyrosyl-[protein] + 3'-phosphoadenylyl sulfate = O-sulfo-L-tyrosine-[protein] + adenosine 3',5'-bisphosphate + H(+). Catalyzes the O-sulfation of tyrosine residues within acidic motifs of polypeptides, using 3'-phosphoadenylyl sulfate (PAPS) as cosubstrate. The polypeptide is Protein-tyrosine sulfotransferase 1 (Tpst1) (Mus musculus (Mouse)).